Here is a 273-residue protein sequence, read N- to C-terminus: Zinc finger protein 32 (273 aa).

3 C2H2-type zinc fingers span residues 77–99, 105–127, and 133–155; these read YECQECGKSFRQKGSLTLHERIH, FECTHCGKSFRAKGNLVTHQRIH, and YQCKECGKSFSQRGSLAVHERLH. Residues Cys79, Cys82, His95, His99, Cys107, Cys110, His123, His127, Ser141, Gln144, Gly157, Tyr161, Phe198, Lys201, Leu214, Ala218, Cys247, Cys250, His263, and Cys267 each coordinate Zn(2+). 2 consecutive C2H2-type zinc fingers follow at residues 161-183 and 189-211; these read YECAICQRSFRNQSNLAVHRRVH and YRCDQCGKAFSQKGSLIVHIRVH. A C2H2-type 6 zinc finger spans residues 217-239; sequence YACTQCRKSFHTRGNCILHGKIH. The CCHC-type zinc finger occupies 245–267; that stretch reads YLCGQCGKSFTQRGSLAVHQRSC.

The protein belongs to the krueppel C2H2-type zinc-finger protein family.

The protein resides in the nucleus. Functionally, may be involved in transcriptional regulation. In Homo sapiens (Human), this protein is Zinc finger protein 32 (ZNF32).